We begin with the raw amino-acid sequence, 345 residues long: Mariner Mos1 transposase (345 aa).

The segment at 1-112 (MSSFVPNKEQ…VSNRLREMGK (112 aa)) is DNA-binding. 2 DNA-binding regions (H-T-H motif) span residues 24 to 55 (TAAESHRMLVEAFGEQVPTVKKCERWFQRFKS) and 89 to 110 (QKQLAEQLEVSQQAVSNRLREM). A linker region spans residues 113-125 (IQKVGRWVPHELN). Residues 126 to 345 (ERQMERRKNT…CVASDGKYLE (220 aa)) are catalytic. Mg(2+)-binding residues include Asp156, Asp249, and Asp284.

As to quaternary structure, homodimer. The complex has a trans arrangement, with each transposon end recognized by the DNA binding region of one transposase monomer and by the active site of the other monomer. It depends on Mg(2+) as a cofactor. Requires Mn(2+) as cofactor.

The protein localises to the nucleus. In terms of biological role, mediates transposition of transposon Mos1 by a 'cut and paste' mechanism. Transposases are sequence-specific nucleases and strand transferases that catalyze transposition through an ordered series of events: sequence-specific binding of transposase to the terminal inverted repeats (IR) present at each end of the transposon, pairing of the transposon IRs in a paired-end complex (PEC), cleavage of one or both DNA strands at each transposon end, capture of target DNA, and strand transfer to insert the transposon at a new site. The polypeptide is Mariner Mos1 transposase (mariner\T) (Drosophila mauritiana (Fruit fly)).